A 234-amino-acid polypeptide reads, in one-letter code: MGGCVGAQHDSSGSLNENSDGTGVALGRNQPLKKEKPKWKSDYPMTDGQLRSKRDEFWDTAPAFEGRKEIWDALKAAAHAFESNDHELAQAIIDGANITLPHGALTECYDELGNRYQLPVYCLAPPINMIEEKSDIETLDIPEPPPNSGHESQLRLRLSTGKDLRLVVRSTDTVFHMKRRLHATEGVEPGSQRWFFSGRPLTDKMKLEELKIPKDYVVQVIVSQPVQTPTPVEN.

The disordered stretch occupies residues 1-46; that stretch reads MGGCVGAQHDSSGSLNENSDGTGVALGRNQPLKKEKPKWKSDYPMT. Residues 9-21 show a composition bias toward polar residues; sequence HDSSGSLNENSDG. Residues 32–41 show a composition bias toward basic and acidic residues; sequence LKKEKPKWKS. Residues 152-227 enclose the Ubiquitin-like domain; sequence SQLRLRLSTG…VQVIVSQPVQ (76 aa).

Its subcellular location is the cytoplasm. This Mus musculus (Mouse) protein is Ubiquitin domain-containing protein 2 (Ubtd2).